Here is a 156-residue protein sequence, read N- to C-terminus: MHRREQSFGIQMLSVQPDTKPKGCAGCNRKIKDRYLLKALDKYWHEDCLKCACCDCRLGEVGSTLYTKANLILCRRDYLRLFGVTGNCAACSKLIPAFEMVMRAKENVYHLDCFACQLCNQRFCVGDKFFLKNNMILCQTDYEEGLMKEGYSAQVR.

LIM zinc-binding domains follow at residues 22-84 and 86-148; these read KGCA…LFGV and GNCA…GLMK.

The sequence is that of LIM domain only protein 3 from Xenopus laevis (African clawed frog).